A 1511-amino-acid chain; its full sequence is DNA-directed RNA polymerase subunit beta' (1511 aa).

Residues C75, C77, C90, and C93 each contribute to the Zn(2+) site. Positions 474, 476, and 478 each coordinate Mg(2+). Zn(2+)-binding residues include C804, C878, C885, and C888.

It belongs to the RNA polymerase beta' chain family. The RNAP catalytic core consists of 2 alpha, 1 beta, 1 beta' and 1 omega subunit. When a sigma factor is associated with the core the holoenzyme is formed, which can initiate transcription. Mg(2+) is required as a cofactor. It depends on Zn(2+) as a cofactor.

The enzyme catalyses RNA(n) + a ribonucleoside 5'-triphosphate = RNA(n+1) + diphosphate. DNA-dependent RNA polymerase catalyzes the transcription of DNA into RNA using the four ribonucleoside triphosphates as substrates. This Aliarcobacter butzleri (strain RM4018) (Arcobacter butzleri) protein is DNA-directed RNA polymerase subunit beta'.